The following is a 129-amino-acid chain: Small ribosomal subunit protein uS11 (129 aa).

Belongs to the universal ribosomal protein uS11 family. As to quaternary structure, part of the 30S ribosomal subunit. Interacts with proteins S7 and S18. Binds to IF-3.

Located on the platform of the 30S subunit, it bridges several disparate RNA helices of the 16S rRNA. Forms part of the Shine-Dalgarno cleft in the 70S ribosome. The sequence is that of Small ribosomal subunit protein uS11 from Limosilactobacillus fermentum (strain NBRC 3956 / LMG 18251) (Lactobacillus fermentum).